Reading from the N-terminus, the 665-residue chain is Translation factor GUF1 homolog, mitochondrial (665 aa).

A mitochondrion-targeting transit peptide spans 1-35 (MAGAAVLRRSARRIYRHLAAAPAFSRSVLQQPKRL). The segment at 34–53 (RLLSSQSSPEHGARGAVSGS) is disordered. Positions 61-249 (ERVRNFSIIA…AVIERIPSPP (189 aa)) constitute a tr-type G domain. GTP-binding positions include 70-77 (AHVDHGKS), 142-146 (DTPGH), and 196-199 (NKID).

Belongs to the TRAFAC class translation factor GTPase superfamily. Classic translation factor GTPase family. LepA subfamily.

Its subcellular location is the mitochondrion inner membrane. The catalysed reaction is GTP + H2O = GDP + phosphate + H(+). Functionally, promotes mitochondrial protein synthesis. May act as a fidelity factor of the translation reaction, by catalyzing a one-codon backward translocation of tRNAs on improperly translocated ribosomes. Binds to mitochondrial ribosomes in a GTP-dependent manner. The chain is Translation factor GUF1 homolog, mitochondrial from Sorghum bicolor (Sorghum).